Here is a 395-residue protein sequence, read N- to C-terminus: Pyruvate synthase subunit PorA (395 aa).

Heterotetramer of one alpha, one beta, one delta and one gamma chain.

The enzyme catalyses 2 oxidized [2Fe-2S]-[ferredoxin] + pyruvate + CoA = 2 reduced [2Fe-2S]-[ferredoxin] + acetyl-CoA + CO2 + H(+). In Pyrococcus abyssi (strain GE5 / Orsay), this protein is Pyruvate synthase subunit PorA (porA).